We begin with the raw amino-acid sequence, 228 residues long: Aquaporin Z 1 (228 aa).

The next 2 helical transmembrane spans lie at 9–29 (FLGT…AAAF) and 34–54 (IGLL…AYAV). The short motif at 63 to 65 (NPA) is the NPA 1 element. 3 helical membrane-spanning segments follow: residues 82-102 (VGYI…LYVI), 129-149 (LTAA…IILG), and 156-176 (PVGF…LVSI). The NPA 2 motif lies at 184-186 (NPA). A helical membrane pass occupies residues 204–224 (WLFWVAPLIGAVIAGIVWKIV).

Belongs to the MIP/aquaporin (TC 1.A.8) family. Homotetramer.

The protein localises to the cell inner membrane. The catalysed reaction is H2O(in) = H2O(out). In terms of biological role, channel that permits osmotically driven movement of water in both directions. It is involved in the osmoregulation and in the maintenance of cell turgor during volume expansion in rapidly growing cells. It mediates rapid entry or exit of water in response to abrupt changes in osmolarity. This Rhizobium meliloti (strain 1021) (Ensifer meliloti) protein is Aquaporin Z 1.